The following is a 384-amino-acid chain: Glucans biosynthesis protein C (384 aa).

Helical transmembrane passes span Ala17–Trp37, Phe54–Leu74, Val91–Gln111, Leu140–Phe160, Ala173–Ile193, Phe212–Ile232, Phe240–Leu260, Thr274–Gly294, Ala311–Thr331, and Leu338–Ile358.

Belongs to the acyltransferase 3 family. OpgC subfamily.

The protein resides in the cell membrane. It functions in the pathway glycan metabolism; osmoregulated periplasmic glucan (OPG) biosynthesis. In terms of biological role, necessary for the succinyl substitution of periplasmic glucans. Could catalyze the transfer of succinyl residues from the cytoplasmic side of the membrane to the nascent glucan backbones on the periplasmic side of the membrane. The protein is Glucans biosynthesis protein C of Salmonella agona (strain SL483).